The sequence spans 82 residues: DinI-like protein (82 aa).

Belongs to the DinI family.

This is DinI-like protein from Enterobacteria phage VT1-Sakai.